Reading from the N-terminus, the 222-residue chain is Uridine kinase (222 aa).

13–20 (GGSGAGKT) lines the ATP pocket.

It belongs to the uridine kinase family.

Its subcellular location is the cytoplasm. The catalysed reaction is uridine + ATP = UMP + ADP + H(+). It catalyses the reaction cytidine + ATP = CMP + ADP + H(+). It functions in the pathway pyrimidine metabolism; CTP biosynthesis via salvage pathway; CTP from cytidine: step 1/3. Its pathway is pyrimidine metabolism; UMP biosynthesis via salvage pathway; UMP from uridine: step 1/1. The chain is Uridine kinase from Chlamydia pneumoniae (Chlamydophila pneumoniae).